Reading from the N-terminus, the 449-residue chain is MQVTVNEHDAVERVATATPAGNREAHAHGTDKLAIEGGRRLAGEIAVSGAKNAALPILCAGLLSAEPVRLDNVPDLKDVRTTLALLGQMGMREETDGARVVLDASRVDNPVAPYELVKTMRASILVLGPLLARFGYAKVSLPGGCAIGARPVDQHIKGLQAMGAEIHIEHGYIEARAKRLSGARIVTDMITVTGTENLLMAATLADGETVIENAAREPEVTDLAHLLVAMGAKIDGIGTDRLVIQGVERLHGATHAVIPDRIEAGTFLCAVAAAGGDVTLTGMRAHILDAVIDKLREAGATIDEGVDTLRVRMDGRPSAVAIRTSEYPAFPTDMQAQFMALNAVAQGAAQVTETIFENRFMHVQELNRLGANIAVDGNTALVTGVPKLSGASVMATDLRASASLVIAGLCAQGETLVERIYHLDRGYDRMETKLTAVGANVRRISGSEA.

A compositionally biased stretch (basic and acidic residues) spans 1 to 12; it reads MQVTVNEHDAVE. The segment at 1–30 is disordered; it reads MQVTVNEHDAVERVATATPAGNREAHAHGT. 51–52 is a binding site for phosphoenolpyruvate; sequence KN. Arg-121 serves as a coordination point for UDP-N-acetyl-alpha-D-glucosamine. Residue Cys-145 is the Proton donor of the active site. Cys-145 carries the post-translational modification 2-(S-cysteinyl)pyruvic acid O-phosphothioketal. UDP-N-acetyl-alpha-D-glucosamine-binding positions include 150–154, Asp-333, and Ile-355; that span reads RPVDQ.

Belongs to the EPSP synthase family. MurA subfamily.

Its subcellular location is the cytoplasm. It carries out the reaction phosphoenolpyruvate + UDP-N-acetyl-alpha-D-glucosamine = UDP-N-acetyl-3-O-(1-carboxyvinyl)-alpha-D-glucosamine + phosphate. The protein operates within cell wall biogenesis; peptidoglycan biosynthesis. Cell wall formation. Adds enolpyruvyl to UDP-N-acetylglucosamine. In Burkholderia pseudomallei (strain 1710b), this protein is UDP-N-acetylglucosamine 1-carboxyvinyltransferase.